The sequence spans 159 residues: uncharacterized protein (159 aa).

A helical membrane pass occupies residues Gln4–Phe24.

The protein resides in the membrane. This is an uncharacterized protein from Acheta domesticus (House cricket).